A 493-amino-acid polypeptide reads, in one-letter code: Ribose import ATP-binding protein RbsA (493 aa).

ABC transporter domains lie at 5–241 and 252–491; these read LKIS…VGRR and EKGE…AAAI. An ATP-binding site is contributed by 37 to 44; sequence GENGAGKS.

It belongs to the ABC transporter superfamily. Ribose importer (TC 3.A.1.2.1) family. In terms of assembly, the complex is composed of an ATP-binding protein (RbsA), two transmembrane proteins (RbsC) and a solute-binding protein (RbsB).

The protein localises to the cell inner membrane. It carries out the reaction D-ribose(out) + ATP + H2O = D-ribose(in) + ADP + phosphate + H(+). In terms of biological role, part of the ABC transporter complex RbsABC involved in ribose import. Responsible for energy coupling to the transport system. The polypeptide is Ribose import ATP-binding protein RbsA (Haemophilus influenzae (strain ATCC 51907 / DSM 11121 / KW20 / Rd)).